Consider the following 167-residue polypeptide: 2-C-methyl-D-erythritol 2,4-cyclodiphosphate synthase (167 aa).

Aspartate 11 and histidine 13 together coordinate a divalent metal cation. 4-CDP-2-C-methyl-D-erythritol 2-phosphate is bound by residues aspartate 11–histidine 13 and histidine 37–serine 38. Histidine 45 serves as a coordination point for a divalent metal cation. Residues aspartate 59–glycine 61, phenylalanine 64–aspartate 68, alanine 103–alanine 109, and arginine 145 each bind 4-CDP-2-C-methyl-D-erythritol 2-phosphate.

This sequence belongs to the IspF family. In terms of assembly, homotrimer. The cofactor is a divalent metal cation.

It carries out the reaction 4-CDP-2-C-methyl-D-erythritol 2-phosphate = 2-C-methyl-D-erythritol 2,4-cyclic diphosphate + CMP. The protein operates within isoprenoid biosynthesis; isopentenyl diphosphate biosynthesis via DXP pathway; isopentenyl diphosphate from 1-deoxy-D-xylulose 5-phosphate: step 4/6. Its function is as follows. Involved in the biosynthesis of isopentenyl diphosphate (IPP) and dimethylallyl diphosphate (DMAPP), two major building blocks of isoprenoid compounds. Catalyzes the conversion of 4-diphosphocytidyl-2-C-methyl-D-erythritol 2-phosphate (CDP-ME2P) to 2-C-methyl-D-erythritol 2,4-cyclodiphosphate (ME-CPP) with a corresponding release of cytidine 5-monophosphate (CMP). This is 2-C-methyl-D-erythritol 2,4-cyclodiphosphate synthase from Nitrosomonas eutropha (strain DSM 101675 / C91 / Nm57).